The chain runs to 496 residues: Cruciferin BnC2 (496 aa).

Positions 1-23 (MARLSSLLYFSITVLIFLHGSTA) are cleaved as a signal peptide. Disulfide bonds link Cys30/Cys63 and Cys106/Cys313. Cupin type-1 domains are found at residues 35–269 (LNAL…RTAQ) and 319–468 (DNLD…EEAR). A Phosphothreonine modification is found at Thr109. The tract at residues 114 to 170 (SVFQPGSGSPFGEGQGQGQQGQGQGQGQGQGKGQQGQGKGQQGQSQGQQGQGQGFRD) is disordered. Gly residues predominate over residues 122-154 (SPFGEGQGQGQQGQGQGQGQGQGKGQQGQGKGQ). A Phosphotyrosine modification is found at Tyr336. Ser338 carries the post-translational modification Phosphoserine. Thr432 carries the post-translational modification Phosphothreonine.

This sequence belongs to the 11S seed storage protein (globulins) family. As to quaternary structure, hexamer; each subunit is composed of an acidic and a basic chain derived from a single precursor and linked by a disulfide bond.

Its function is as follows. This is a seed storage protein. In Brassica napus (Rape), this protein is Cruciferin BnC2 (BnC2).